A 357-amino-acid chain; its full sequence is Protein-glutamate methylesterase/protein-glutamine glutaminase (357 aa).

One can recognise a Response regulatory domain in the interval 3 to 120 (RVIVVDDSAF…LASMDLAALS (118 aa)). A 4-aspartylphosphate modification is found at aspartate 54. The 193-residue stretch at 165 to 357 (ERSRRDIIAI…AERVASALYK (193 aa)) folds into the CheB-type methylesterase domain. Catalysis depends on residues serine 177, histidine 204, and aspartate 300.

This sequence belongs to the CheB family. Phosphorylated by CheA. Phosphorylation of the N-terminal regulatory domain activates the methylesterase activity.

The protein resides in the cytoplasm. The enzyme catalyses [protein]-L-glutamate 5-O-methyl ester + H2O = L-glutamyl-[protein] + methanol + H(+). It catalyses the reaction L-glutaminyl-[protein] + H2O = L-glutamyl-[protein] + NH4(+). In terms of biological role, involved in chemotaxis. Part of a chemotaxis signal transduction system that modulates chemotaxis in response to various stimuli. Catalyzes the demethylation of specific methylglutamate residues introduced into the chemoreceptors (methyl-accepting chemotaxis proteins or MCP) by CheR. Also mediates the irreversible deamidation of specific glutamine residues to glutamic acid. This is Protein-glutamate methylesterase/protein-glutamine glutaminase from Lawsonia intracellularis (strain PHE/MN1-00).